Consider the following 383-residue polypeptide: Chaperone protein DnaJ (383 aa).

The J domain occupies 5–70 (DYYELLGVSR…QKRAAYDRFG (66 aa)). The CR-type zinc finger occupies 140-219 (GTKTEIRVPT…CSGAGTVPRE (80 aa)). Cys-153, Cys-156, Cys-171, Cys-174, Cys-193, Cys-196, Cys-207, and Cys-210 together coordinate Zn(2+). 4 CXXCXGXG motif repeats span residues 153 to 160 (CDACSGTG), 171 to 178 (CPTCGGAG), 193 to 200 (CPTCGGAG), and 207 to 214 (CRVCSGAG).

Belongs to the DnaJ family. Homodimer. Requires Zn(2+) as cofactor.

It is found in the cytoplasm. Its function is as follows. Participates actively in the response to hyperosmotic and heat shock by preventing the aggregation of stress-denatured proteins and by disaggregating proteins, also in an autonomous, DnaK-independent fashion. Unfolded proteins bind initially to DnaJ; upon interaction with the DnaJ-bound protein, DnaK hydrolyzes its bound ATP, resulting in the formation of a stable complex. GrpE releases ADP from DnaK; ATP binding to DnaK triggers the release of the substrate protein, thus completing the reaction cycle. Several rounds of ATP-dependent interactions between DnaJ, DnaK and GrpE are required for fully efficient folding. Also involved, together with DnaK and GrpE, in the DNA replication of plasmids through activation of initiation proteins. In Acidiphilium cryptum (strain JF-5), this protein is Chaperone protein DnaJ.